Consider the following 441-residue polypeptide: MKERSTELVQGFRHSVPYINAHRGKTFVIMLSGEAIAEANFVGIINDIALLHSLGIRLVVVYGARPQIDTLLREQRCDPRYHKQIRITDARTLALVKQAAGQVQLDITARLSMSLSNTPLAGAHINVVSGNFIIAQPLGVDDGVDYCHSGRIRRIDEAALRCQLDAGAIVLLGPVAVSVTGESFNLTTEEIATHLAIKLQAEKLIGFCAAQGVCSDDGSIAAELLPNEAEQRVSALEAAGKAAQASTRFLRGAITACRSGVGRSHLISYLEDGALLQELFSRDGIGTQIVMESAEQIRRANINDIGGILALIRPLEQQGILVRRSREQLEREIERFTLIERDSLTIACAALYPFPQERMGEMACVAVHPDYRNSARGEQLLQRITAQARQMGLEKLFVLTTRSLHWFQERGFQPVEVDMLPQQKQALYNYQRRSKILLTEL.

In terms of domain architecture, N-acetyltransferase spans 295–434; sequence EQIRRANIND…QALYNYQRRS (140 aa).

Belongs to the acetyltransferase family. ArgA subfamily. As to quaternary structure, homohexamer.

The protein localises to the cytoplasm. It catalyses the reaction L-glutamate + acetyl-CoA = N-acetyl-L-glutamate + CoA + H(+). Its pathway is amino-acid biosynthesis; L-arginine biosynthesis; N(2)-acetyl-L-ornithine from L-glutamate: step 1/4. The protein is Amino-acid acetyltransferase of Edwardsiella ictaluri (strain 93-146).